The primary structure comprises 492 residues: Protein nucleotidyltransferase YdiU (492 aa).

The ATP site is built by glycine 88, glycine 90, arginine 91, lysine 111, aspartate 123, glycine 124, arginine 174, and arginine 181. Aspartate 250 acts as the Proton acceptor in catalysis. 2 residues coordinate Mg(2+): asparagine 251 and aspartate 260. Aspartate 260 contacts ATP.

Belongs to the SELO family. Mg(2+) is required as a cofactor. It depends on Mn(2+) as a cofactor.

The enzyme catalyses L-seryl-[protein] + ATP = 3-O-(5'-adenylyl)-L-seryl-[protein] + diphosphate. The catalysed reaction is L-threonyl-[protein] + ATP = 3-O-(5'-adenylyl)-L-threonyl-[protein] + diphosphate. It carries out the reaction L-tyrosyl-[protein] + ATP = O-(5'-adenylyl)-L-tyrosyl-[protein] + diphosphate. It catalyses the reaction L-histidyl-[protein] + UTP = N(tele)-(5'-uridylyl)-L-histidyl-[protein] + diphosphate. The enzyme catalyses L-seryl-[protein] + UTP = O-(5'-uridylyl)-L-seryl-[protein] + diphosphate. The catalysed reaction is L-tyrosyl-[protein] + UTP = O-(5'-uridylyl)-L-tyrosyl-[protein] + diphosphate. Functionally, nucleotidyltransferase involved in the post-translational modification of proteins. It can catalyze the addition of adenosine monophosphate (AMP) or uridine monophosphate (UMP) to a protein, resulting in modifications known as AMPylation and UMPylation. This chain is Protein nucleotidyltransferase YdiU, found in Rhodopseudomonas palustris (strain ATCC BAA-98 / CGA009).